Consider the following 163-residue polypeptide: Ribosome maturation factor RimP (163 aa).

Residues 66-85 (ALDRDDPVPGPPYELEVSSP) form a disordered region.

It belongs to the RimP family.

The protein resides in the cytoplasm. In terms of biological role, required for maturation of 30S ribosomal subunits. The chain is Ribosome maturation factor RimP from Kocuria rhizophila (strain ATCC 9341 / DSM 348 / NBRC 103217 / DC2201).